Reading from the N-terminus, the 395-residue chain is 1-deoxy-D-xylulose 5-phosphate reductoisomerase (395 aa).

The NADPH site is built by T10, G11, S12, I13, and N123. Residue K124 participates in 1-deoxy-D-xylulose 5-phosphate binding. NADPH is bound at residue E125. D149 is a binding site for Mn(2+). The 1-deoxy-D-xylulose 5-phosphate site is built by S150, E151, S185, and H208. E151 serves as a coordination point for Mn(2+). G214 contacts NADPH. 1-deoxy-D-xylulose 5-phosphate contacts are provided by S221, N226, K227, and E230. E230 serves as a coordination point for Mn(2+).

This sequence belongs to the DXR family. Requires Mg(2+) as cofactor. Mn(2+) serves as cofactor.

It carries out the reaction 2-C-methyl-D-erythritol 4-phosphate + NADP(+) = 1-deoxy-D-xylulose 5-phosphate + NADPH + H(+). Its pathway is isoprenoid biosynthesis; isopentenyl diphosphate biosynthesis via DXP pathway; isopentenyl diphosphate from 1-deoxy-D-xylulose 5-phosphate: step 1/6. Catalyzes the NADPH-dependent rearrangement and reduction of 1-deoxy-D-xylulose-5-phosphate (DXP) to 2-C-methyl-D-erythritol 4-phosphate (MEP). The polypeptide is 1-deoxy-D-xylulose 5-phosphate reductoisomerase (Shewanella sediminis (strain HAW-EB3)).